Here is a 37-residue protein sequence, read N- to C-terminus: Neuropeptide Y2-like conopeptide (37 aa).

Residue Tyr-37 is modified to Tyrosine amide.

This sequence belongs to the NPY family. Expressed by the venom duct.

Its subcellular location is the secreted. Its function is as follows. Causes hyperactivity such as jumping, rapid circling and tail flicking, after intraventicular injection into mouse brain. This chain is Neuropeptide Y2-like conopeptide, found in Conus betulinus (Beech cone).